A 366-amino-acid polypeptide reads, in one-letter code: S-adenosylmethionine synthase 1 (366 aa).

Glutamate 18 contributes to the K(+) binding site. 2 residues coordinate L-methionine: glutamate 31 and glutamine 74. ATP contacts are provided by residues 142–144, 210–213, aspartate 221, 227–228, alanine 244, lysine 248, and lysine 252; these read DGN, SGRF, and RK. Residue aspartate 221 participates in L-methionine binding. Lysine 252 provides a ligand contact to L-methionine.

Belongs to the AdoMet synthase family. As to quaternary structure, homotetramer. Requires Mn(2+) as cofactor. Mg(2+) serves as cofactor. The cofactor is Co(2+). It depends on K(+) as a cofactor.

The protein localises to the cytoplasm. The catalysed reaction is L-methionine + ATP + H2O = S-adenosyl-L-methionine + phosphate + diphosphate. Its pathway is amino-acid biosynthesis; S-adenosyl-L-methionine biosynthesis; S-adenosyl-L-methionine from L-methionine: step 1/1. Functionally, catalyzes the formation of S-adenosylmethionine from methionine and ATP. The reaction comprises two steps that are both catalyzed by the same enzyme: formation of S-adenosylmethionine (AdoMet) and triphosphate, and subsequent hydrolysis of the triphosphate. The chain is S-adenosylmethionine synthase 1 (SAMS1) from Pisum sativum (Garden pea).